Reading from the N-terminus, the 317-residue chain is Neuroguidin-A (317 aa).

Disordered regions lie at residues 125-170 (ENDP…SKVK) and 280-317 (SALTGGEGRAEDMVPSMKKSKKGPKKSKKKKGFSRRRH). A compositionally biased stretch (acidic residues) spans 146-157 (DERESDSGEEGA). The span at 297–317 (KKSKKGPKKSKKKKGFSRRRH) shows a compositional bias: basic residues.

The protein belongs to the SAS10 family. In terms of assembly, part of the small subunit (SSU) processome, composed of more than 70 proteins and the RNA chaperone small nucleolar RNA (snoRNA) U3.

It is found in the nucleus. Its subcellular location is the nucleolus. The protein resides in the chromosome. It localises to the centromere. The protein localises to the cytoplasm. It is found in the cell projection. Its subcellular location is the axon. The protein resides in the dendrite. It localises to the filopodium. Functionally, part of the small subunit (SSU) processome, first precursor of the small eukaryotic ribosomal subunit. During the assembly of the SSU processome in the nucleolus, many ribosome biogenesis factors, an RNA chaperone and ribosomal proteins associate with the nascent pre-rRNA and work in concert to generate RNA folding, modifications, rearrangements and cleavage as well as targeted degradation of pre-ribosomal RNA by the RNA exosome. Its dissociation from the complex determines the transition from state pre-A1 to state pre-A1*. May inhibit mRNA translation. This Xenopus laevis (African clawed frog) protein is Neuroguidin-A (ngdn-a).